The sequence spans 347 residues: Protein RecA (347 aa).

65-72 (GPESSGKT) lines the ATP pocket. Basic and acidic residues predominate over residues 327-336 (KFEPTELSRE). Positions 327-347 (KFEPTELSREEGDEDTLEDTM) are disordered. Positions 337-347 (EGDEDTLEDTM) are enriched in acidic residues.

The protein belongs to the RecA family.

The protein localises to the cytoplasm. In terms of biological role, can catalyze the hydrolysis of ATP in the presence of single-stranded DNA, the ATP-dependent uptake of single-stranded DNA by duplex DNA, and the ATP-dependent hybridization of homologous single-stranded DNAs. It interacts with LexA causing its activation and leading to its autocatalytic cleavage. In Xylella fastidiosa (strain 9a5c), this protein is Protein RecA.